A 432-amino-acid chain; its full sequence is Adenylosuccinate synthetase (432 aa).

GTP contacts are provided by residues 12 to 18 (GDEGKGK) and 40 to 42 (GHT). The active-site Proton acceptor is the aspartate 13. Mg(2+) is bound by residues aspartate 13 and glycine 40. IMP-binding positions include 13 to 16 (DEGK), 38 to 41 (NAGH), threonine 126, arginine 140, glutamine 219, threonine 234, and arginine 300. The active-site Proton donor is the histidine 41. 296 to 302 (STTGRPR) is a binding site for substrate. Residues arginine 302, 328–330 (KLD), and 410–412 (STG) each bind GTP.

The protein belongs to the adenylosuccinate synthetase family. In terms of assembly, homodimer. It depends on Mg(2+) as a cofactor.

The protein resides in the cytoplasm. It catalyses the reaction IMP + L-aspartate + GTP = N(6)-(1,2-dicarboxyethyl)-AMP + GDP + phosphate + 2 H(+). It participates in purine metabolism; AMP biosynthesis via de novo pathway; AMP from IMP: step 1/2. Functionally, plays an important role in the de novo pathway of purine nucleotide biosynthesis. Catalyzes the first committed step in the biosynthesis of AMP from IMP. This Aquifex aeolicus (strain VF5) protein is Adenylosuccinate synthetase.